A 630-amino-acid chain; its full sequence is Chaperone protein HtpG (630 aa).

The tract at residues 1–339 (MSHTETHAFQ…SNDLPLNVSR (339 aa)) is a; substrate-binding. The b stretch occupies residues 340-556 (EILQSNRVVD…EGDISAHMAR (217 aa)). Positions 557 to 630 (MMEQMGQAMP…RMNALLSEVI (74 aa)) are c.

It belongs to the heat shock protein 90 family. In terms of assembly, homodimer.

The protein resides in the cytoplasm. Functionally, molecular chaperone. Has ATPase activity. The chain is Chaperone protein HtpG from Hydrogenovibrio crunogenus (strain DSM 25203 / XCL-2) (Thiomicrospira crunogena).